Here is an 852-residue protein sequence, read N- to C-terminus: Translation initiation factor IF-2 (852 aa).

The interval 1-240 is disordered; the sequence is MEDKNKTIKE…KTSSDKRDFS (240 aa). Residues 78-90 are compositionally biased toward basic and acidic residues; the sequence is KEVKYEESSRKQD. Polar residues predominate over residues 106 to 120; it reads VRPSGDSSYPVSRSP. Positions 150–200 are enriched in gly residues; it reads RGPGQGGGYQGNRGPGQGGGYQGNRGPGQQTGPGNRFGGSGPGNRSGGPGG. Basic and acidic residues predominate over residues 227-240; the sequence is HDKEKTSSDKRDFS. One can recognise a tr-type G domain in the interval 347–516; sequence NRPPVVTIMG…LLQAEVMDLK (170 aa). The G1 stretch occupies residues 356-363; it reads GHVDHGKT. 356–363 contacts GTP; sequence GHVDHGKT. The G2 stretch occupies residues 381–385; that stretch reads GITQH. Residues 402 to 405 form a G3 region; sequence DTPG. GTP-binding positions include 402–406 and 456–459; these read DTPGH and NKID. Residues 456–459 are G4; that stretch reads NKID. The G5 stretch occupies residues 492 to 494; that stretch reads SAR.

The protein belongs to the TRAFAC class translation factor GTPase superfamily. Classic translation factor GTPase family. IF-2 subfamily.

Its subcellular location is the cytoplasm. In terms of biological role, one of the essential components for the initiation of protein synthesis. Protects formylmethionyl-tRNA from spontaneous hydrolysis and promotes its binding to the 30S ribosomal subunits. Also involved in the hydrolysis of GTP during the formation of the 70S ribosomal complex. The polypeptide is Translation initiation factor IF-2 (Leptospira borgpetersenii serovar Hardjo-bovis (strain JB197)).